We begin with the raw amino-acid sequence, 294 residues long: GDP-6-deoxy-D-talose 4-dehydrogenase (294 aa).

NAD(+) is bound by residues 11-12 (FI), 38-39 (DL), 60-64 (LAALT), Thr-104, Tyr-128, Lys-132, and Phe-154. Substrate contacts are provided by Thr-104 and Tyr-128. Tyr-128 serves as the catalytic Proton acceptor. 2 residues coordinate substrate: Asn-155 and Arg-190.

Belongs to the NAD(P)-dependent epimerase/dehydratase family.

The enzyme catalyses GDP-6-deoxy-alpha-D-talose + NAD(+) = GDP-4-dehydro-alpha-D-rhamnose + NADH + H(+). It carries out the reaction GDP-6-deoxy-alpha-D-talose + NADP(+) = GDP-4-dehydro-alpha-D-rhamnose + NADPH + H(+). Its pathway is bacterial outer membrane biogenesis; LPS O-antigen biosynthesis. Functionally, catalyzes the conversion of GDP-4-dehydro-6-deoxy-D-mannose to GDP-6-deoxy-D-talose. The protein is GDP-6-deoxy-D-talose 4-dehydrogenase (tld) of Aggregatibacter actinomycetemcomitans (Actinobacillus actinomycetemcomitans).